The chain runs to 297 residues: MNKIVVLTGPTASGKSSLSIQMAQRLNGEIVSADSMQIYRNLDVGTAKVTKEEQNIVPHHLIDIVDLTANYSVGDFIIAADKVIADIISRGKLPIIVGGTGLYVKALLGFQELEYAASDTEEVHKLNAYELDKLVVELKSLDINRAQKVDLKNKQRVIRAIQIAKYGKKDAKLTQRPKYDALVIGLDWPRELLYERINHRVTQMVQDGVLKEAQTILDAGGEKLQSGKAIGYKEFFPYLRDQVTLDKAINQLQQDSRRYAKRQLTYLRHQIPGLVWLKGQTAELRLTEMIEGWLSLK.

An ATP-binding site is contributed by 9 to 16 (GPTASGKS). 11–16 (TASGKS) provides a ligand contact to substrate. Interaction with substrate tRNA regions lie at residues 34 to 37 (DSMQ) and 155 to 159 (QRVIR).

Belongs to the IPP transferase family. In terms of assembly, monomer. Requires Mg(2+) as cofactor.

The catalysed reaction is adenosine(37) in tRNA + dimethylallyl diphosphate = N(6)-dimethylallyladenosine(37) in tRNA + diphosphate. Functionally, catalyzes the transfer of a dimethylallyl group onto the adenine at position 37 in tRNAs that read codons beginning with uridine, leading to the formation of N6-(dimethylallyl)adenosine (i(6)A). This chain is tRNA dimethylallyltransferase, found in Leuconostoc mesenteroides subsp. mesenteroides (strain ATCC 8293 / DSM 20343 / BCRC 11652 / CCM 1803 / JCM 6124 / NCDO 523 / NBRC 100496 / NCIMB 8023 / NCTC 12954 / NRRL B-1118 / 37Y).